A 121-amino-acid chain; its full sequence is Basic phospholipase A2 BbTX-III (121 aa).

Tyr27, Gly29, and Gly31 together coordinate Ca(2+). Intrachain disulfides connect Cys28/Cys44, Cys43/Cys95, Cys49/Cys121, Cys50/Cys88, Cys58/Cys82, and Cys76/Cys86. His47 is an active-site residue. Asp48 serves as a coordination point for Ca(2+). Residue Asp89 is part of the active site.

It belongs to the phospholipase A2 family. Group II subfamily. D49 sub-subfamily. In terms of assembly, homodimer; non-covalently linked. Ca(2+) is required as a cofactor. Expressed by the venom gland.

The protein resides in the secreted. The catalysed reaction is a 1,2-diacyl-sn-glycero-3-phosphocholine + H2O = a 1-acyl-sn-glycero-3-phosphocholine + a fatty acid + H(+). Its function is as follows. Snake venom phospholipase A2 (PLA2) that exhibits myotoxin and anticoagulant activity. Displays edema-inducing activities in mouse paw. Also displays cytotoxic activity against some cell lines and myotubes, and antimicrobial activities against E.coli, C.albicans and Leishmania. PLA2 catalyzes the calcium-dependent hydrolysis of the 2-acyl groups in 3-sn-phosphoglycerides. The chain is Basic phospholipase A2 BbTX-III from Bothrops brazili (Brazil's lancehead).